We begin with the raw amino-acid sequence, 272 residues long: PILR alpha-associated neural protein (272 aa).

The N-terminal stretch at 1–27 (MWPAQLLSQLLPLWPLLLLPLSLPAQG) is a signal peptide. Residues 25–93 (AQGSSHRSPP…PSGFEEGPPS (69 aa)) are disordered. Topologically, residues 28–174 (SSHRSPPAPA…FGGRGEGVDP (147 aa)) are extracellular. The O-linked (GalNAc...) threonine glycan is linked to T136. Residues 175–195 (QLYVTITISIIIVLVATGIIF) form a helical membrane-spanning segment. The Cytoplasmic segment spans residues 196–272 (KFCWDRSQKR…KGAPAFQLNR (77 aa)). The disordered stretch occupies residues 205 to 272 (RRRPSGQQGA…KGAPAFQLNR (68 aa)). Over residues 209-225 (SGQQGALRQEESQQPLT) the composition is skewed to polar residues.

Post-translationally, O-glycosylation at Thr-136 is essential for recognition by PILRA.

The protein resides in the membrane. Acts as a ligand for PILRA in neuronal tissues, where it may be involved in immune regulation. This chain is PILR alpha-associated neural protein (Pianp), found in Rattus norvegicus (Rat).